We begin with the raw amino-acid sequence, 295 residues long: uncharacterized protein (295 aa).

Positions 1-26 (MKKYLALAAIVAICALWLTQNSNFEA) are cleaved as a signal peptide.

This is an uncharacterized protein from Archaeoglobus fulgidus (strain ATCC 49558 / DSM 4304 / JCM 9628 / NBRC 100126 / VC-16).